Consider the following 411-residue polypeptide: Tyrosine--tRNA ligase (411 aa).

An L-tyrosine-binding site is contributed by Y33. Residues 38-47 (PTAESLHLGN) carry the 'HIGH' region motif. L-tyrosine is bound by residues Y160 and Q164. The short motif at 222 to 226 (KIGKS) is the 'KMSKS' region element. K225 lines the ATP pocket. The 65-residue stretch at 347 to 411 (SVIETLIKNK…KKQVILFKTV (65 aa)) folds into the S4 RNA-binding domain.

The protein belongs to the class-I aminoacyl-tRNA synthetase family. TyrS type 1 subfamily. As to quaternary structure, homodimer.

The protein resides in the cytoplasm. It catalyses the reaction tRNA(Tyr) + L-tyrosine + ATP = L-tyrosyl-tRNA(Tyr) + AMP + diphosphate + H(+). Its function is as follows. Catalyzes the attachment of tyrosine to tRNA(Tyr) in a two-step reaction: tyrosine is first activated by ATP to form Tyr-AMP and then transferred to the acceptor end of tRNA(Tyr). This Mycoplasmopsis agalactiae (strain NCTC 10123 / CIP 59.7 / PG2) (Mycoplasma agalactiae) protein is Tyrosine--tRNA ligase.